A 139-amino-acid polypeptide reads, in one-letter code: ATP synthase epsilon chain (139 aa).

This sequence belongs to the ATPase epsilon chain family. F-type ATPases have 2 components, CF(1) - the catalytic core - and CF(0) - the membrane proton channel. CF(1) has five subunits: alpha(3), beta(3), gamma(1), delta(1), epsilon(1). CF(0) has three main subunits: a, b and c.

It is found in the cell inner membrane. Produces ATP from ADP in the presence of a proton gradient across the membrane. The chain is ATP synthase epsilon chain from Pseudomonas entomophila (strain L48).